An 882-amino-acid chain; its full sequence is Homeobox-leucine zipper protein ROC3 (882 aa).

The interval 104–144 is disordered; the sequence is DVDDDHKPQHSGHDQPPDAAQPSGAAGGNAKKKRYHRHTAH. The span at 107–119 shows a compositional bias: basic and acidic residues; the sequence is DDHKPQHSGHDQP. Residues 133–143 are compositionally biased toward basic residues; that stretch reads AKKKRYHRHTA. The homeobox DNA-binding region spans 134–193; that stretch reads KKKRYHRHTAHQIQQMEALFKECPHPDDKQRLKLSQELGLKPRQVKFWFQNRRTQMKAQQ. Positions 200–263 form a coiled coil; that stretch reads ILRAENENLK…LDRLACIATR (64 aa). The 245-residue stretch at 340–584 folds into the START domain; sequence QEQDKQLVVD…LQRQCERLAS (245 aa). Positions 782 to 816 are enriched in low complexity; the sequence is AAAPTISSSTTTTTGNGNGETSSTPPRNSSSNNNN. The interval 782–820 is disordered; sequence AAAPTISSSTTTTTGNGNGETSSTPPRNSSSNNNNADEL.

The protein belongs to the HD-ZIP homeobox family. Class IV subfamily.

The protein localises to the nucleus. Its function is as follows. Probable transcription factor. In Oryza sativa subsp. indica (Rice), this protein is Homeobox-leucine zipper protein ROC3 (ROC3).